Reading from the N-terminus, the 718-residue chain is Serine/threonine-protein kinase PAK 5 (718 aa).

Disordered regions lie at residues 1–29 (MFGK…DPQE), 96–119 (RSNS…IQGH), 226–245 (SPLD…TSRC), 264–296 (YDRR…QEPM), and 339–371 (VFSP…SSSH). The CRIB domain maps to 11-24 (ISGPSNFEHRVHTG). The interval 25 to 447 (FDPQEQKFTG…VVSPGDPREY (423 aa)) is linker. S104 is subject to Phosphoserine. At T107 the chain carries Phosphothreonine. Over residues 226–244 (SPLDYSFQLTPSRTAGTSR) the composition is skewed to polar residues. The span at 359–371 (QSQSKVGYSSSSH) shows a compositional bias: low complexity. Residues 448–699 (LDNFIKIGEG…AQELLGHPFL (252 aa)) enclose the Protein kinase domain. ATP-binding positions include 454-462 (IGEGSTGIV) and K477. The Proton acceptor role is filled by D567.

It belongs to the protein kinase superfamily. STE Ser/Thr protein kinase family. STE20 subfamily. Interacts tightly with GTP-bound but not GDP-bound CDC42/p21 and RAC1. Interacts with MARK2, leading to inhibit MARK2 independently of kinase activity. Interacts with RHOD and RHOH. Post-translationally, autophosphorylated when activated by CDC42/p21.

Its subcellular location is the mitochondrion. It localises to the cytoplasm. The protein localises to the nucleus. It catalyses the reaction L-seryl-[protein] + ATP = O-phospho-L-seryl-[protein] + ADP + H(+). The catalysed reaction is L-threonyl-[protein] + ATP = O-phospho-L-threonyl-[protein] + ADP + H(+). Its function is as follows. Serine/threonine protein kinase that plays a role in a variety of different signaling pathways including cytoskeleton regulation, cell migration, proliferation or cell survival. Activation by various effectors including growth factor receptors or active CDC42 and RAC1 results in a conformational change and a subsequent autophosphorylation on several serine and/or threonine residues. Phosphorylates the proto-oncogene RAF and stimulates its kinase activity. Promotes cell survival by phosphorylating the BCL2 antagonist of cell death BAD. Phosphorylates CTNND1, probably to regulate cytoskeletal organization and cell morphology. Keeps microtubules stable through MARK2 inhibition and destabilizes the F-actin network leading to the disappearance of stress fibers and focal adhesions. The polypeptide is Serine/threonine-protein kinase PAK 5 (Pak5) (Rattus norvegicus (Rat)).